The chain runs to 615 residues: Dihydroxy-acid dehydratase (615 aa).

Residue Asp81 coordinates Mg(2+). Residue Cys122 coordinates [2Fe-2S] cluster. Mg(2+) is bound by residues Asp123 and Lys124. Residue Lys124 is modified to N6-carboxylysine. A [2Fe-2S] cluster-binding site is contributed by Cys195. Glu491 provides a ligand contact to Mg(2+). The active-site Proton acceptor is the Ser517.

This sequence belongs to the IlvD/Edd family. As to quaternary structure, homodimer. [2Fe-2S] cluster serves as cofactor. It depends on Mg(2+) as a cofactor.

The enzyme catalyses (2R)-2,3-dihydroxy-3-methylbutanoate = 3-methyl-2-oxobutanoate + H2O. It carries out the reaction (2R,3R)-2,3-dihydroxy-3-methylpentanoate = (S)-3-methyl-2-oxopentanoate + H2O. The protein operates within amino-acid biosynthesis; L-isoleucine biosynthesis; L-isoleucine from 2-oxobutanoate: step 3/4. It functions in the pathway amino-acid biosynthesis; L-valine biosynthesis; L-valine from pyruvate: step 3/4. Functions in the biosynthesis of branched-chain amino acids. Catalyzes the dehydration of (2R,3R)-2,3-dihydroxy-3-methylpentanoate (2,3-dihydroxy-3-methylvalerate) into 2-oxo-3-methylpentanoate (2-oxo-3-methylvalerate) and of (2R)-2,3-dihydroxy-3-methylbutanoate (2,3-dihydroxyisovalerate) into 2-oxo-3-methylbutanoate (2-oxoisovalerate), the penultimate precursor to L-isoleucine and L-valine, respectively. This Shewanella halifaxensis (strain HAW-EB4) protein is Dihydroxy-acid dehydratase.